The chain runs to 309 residues: Aspartate carbamoyltransferase catalytic subunit (309 aa).

Carbamoyl phosphate contacts are provided by arginine 57 and threonine 58. Lysine 86 provides a ligand contact to L-aspartate. Arginine 107, histidine 135, and glutamine 138 together coordinate carbamoyl phosphate. Residues arginine 168 and arginine 229 each coordinate L-aspartate. Positions 269 and 270 each coordinate carbamoyl phosphate.

It belongs to the aspartate/ornithine carbamoyltransferase superfamily. ATCase family. Heterooligomer of catalytic and regulatory chains.

It catalyses the reaction carbamoyl phosphate + L-aspartate = N-carbamoyl-L-aspartate + phosphate + H(+). Its pathway is pyrimidine metabolism; UMP biosynthesis via de novo pathway; (S)-dihydroorotate from bicarbonate: step 2/3. In terms of biological role, catalyzes the condensation of carbamoyl phosphate and aspartate to form carbamoyl aspartate and inorganic phosphate, the committed step in the de novo pyrimidine nucleotide biosynthesis pathway. The sequence is that of Aspartate carbamoyltransferase catalytic subunit from Methanopyrus kandleri (strain AV19 / DSM 6324 / JCM 9639 / NBRC 100938).